A 427-amino-acid chain; its full sequence is GTPase Obg (427 aa).

Residues 1–158 (MFVDIAKIYV…LWVILELKVL (158 aa)) form the Obg domain. An OBG-type G domain is found at 159 to 330 (ADVGLIGYPN…VLKRAYELLK (172 aa)). GTP is bound by residues 165–172 (GYPNVGKS), 190–194 (FTTKY), 212–215 (DIPG), 282–285 (NKMD), and 311–313 (SAA). Residues Ser172 and Thr192 each contribute to the Mg(2+) site. One can recognise an OCT domain in the interval 347-427 (FVYYKKKDVK…ILDVEFEYYE (81 aa)).

The protein belongs to the TRAFAC class OBG-HflX-like GTPase superfamily. OBG GTPase family. As to quaternary structure, monomer. Requires Mg(2+) as cofactor.

Its subcellular location is the cytoplasm. Its function is as follows. An essential GTPase which binds GTP, GDP and possibly (p)ppGpp with moderate affinity, with high nucleotide exchange rates and a fairly low GTP hydrolysis rate. Plays a role in control of the cell cycle, stress response, ribosome biogenesis and in those bacteria that undergo differentiation, in morphogenesis control. The protein is GTPase Obg of Caldicellulosiruptor saccharolyticus (strain ATCC 43494 / DSM 8903 / Tp8T 6331).